The following is a 372-amino-acid chain: Aminomethyltransferase (372 aa).

Belongs to the GcvT family. In terms of assembly, the glycine cleavage system is composed of four proteins: P, T, L and H.

It catalyses the reaction N(6)-[(R)-S(8)-aminomethyldihydrolipoyl]-L-lysyl-[protein] + (6S)-5,6,7,8-tetrahydrofolate = N(6)-[(R)-dihydrolipoyl]-L-lysyl-[protein] + (6R)-5,10-methylene-5,6,7,8-tetrahydrofolate + NH4(+). In terms of biological role, the glycine cleavage system catalyzes the degradation of glycine. This chain is Aminomethyltransferase, found in Streptomyces coelicolor (strain ATCC BAA-471 / A3(2) / M145).